Reading from the N-terminus, the 554-residue chain is Arginine--tRNA ligase (554 aa).

The 'HIGH' region motif lies at 132 to 142; that stretch reads ANPTGPIHLGG.

It belongs to the class-I aminoacyl-tRNA synthetase family. As to quaternary structure, monomer.

It localises to the cytoplasm. The enzyme catalyses tRNA(Arg) + L-arginine + ATP = L-arginyl-tRNA(Arg) + AMP + diphosphate. This is Arginine--tRNA ligase from Kineococcus radiotolerans (strain ATCC BAA-149 / DSM 14245 / SRS30216).